We begin with the raw amino-acid sequence, 95 residues long: Large ribosomal subunit protein bL31 (95 aa).

The segment at 68–95 is disordered; that stretch reads AGLNNINKKPEKKKIQGKSEPRKSLNEL. Basic and acidic residues predominate over residues 80 to 95; it reads KKIQGKSEPRKSLNEL.

This sequence belongs to the bacterial ribosomal protein bL31 family. Type A subfamily. In terms of assembly, part of the 50S ribosomal subunit.

In terms of biological role, binds the 23S rRNA. In Ureaplasma parvum serovar 3 (strain ATCC 700970), this protein is Large ribosomal subunit protein bL31.